Here is an 84-residue protein sequence, read N- to C-terminus: ATP synthase subunit c (84 aa).

The next 2 helical transmembrane spans lie at 8 to 28 (VAGMCAIGAGLASIACIGGGI) and 56 to 76 (IIGSALSEATAIYGFLIAILL).

The protein belongs to the ATPase C chain family. F-type ATPases have 2 components, F(1) - the catalytic core - and F(0) - the membrane proton channel. F(1) has five subunits: alpha(3), beta(3), gamma(1), delta(1), epsilon(1). F(0) has three main subunits: a(1), b(2) and c(10-14). The alpha and beta chains form an alternating ring which encloses part of the gamma chain. F(1) is attached to F(0) by a central stalk formed by the gamma and epsilon chains, while a peripheral stalk is formed by the delta and b chains.

Its subcellular location is the cell membrane. Its function is as follows. F(1)F(0) ATP synthase produces ATP from ADP in the presence of a proton or sodium gradient. F-type ATPases consist of two structural domains, F(1) containing the extramembraneous catalytic core and F(0) containing the membrane proton channel, linked together by a central stalk and a peripheral stalk. During catalysis, ATP synthesis in the catalytic domain of F(1) is coupled via a rotary mechanism of the central stalk subunits to proton translocation. In terms of biological role, key component of the F(0) channel; it plays a direct role in translocation across the membrane. A homomeric c-ring of between 10-14 subunits forms the central stalk rotor element with the F(1) delta and epsilon subunits. This Clostridium novyi (strain NT) protein is ATP synthase subunit c.